Here is a 154-residue protein sequence, read N- to C-terminus: Transcriptional repressor NrdR (154 aa).

A zinc finger lies at 3-34 (CPFCGANDTKVIDSRLVAEGEQVRRRRECVAC). One can recognise an ATP-cone domain in the interval 49–139 (PRLIKQDGTR…VYRRFQDLDE (91 aa)).

This sequence belongs to the NrdR family. Zn(2+) serves as cofactor.

In terms of biological role, negatively regulates transcription of bacterial ribonucleotide reductase nrd genes and operons by binding to NrdR-boxes. The protein is Transcriptional repressor NrdR of Pseudomonas putida (strain GB-1).